The chain runs to 290 residues: Ras-like protein 1 (290 aa).

11–18 (GGGGVGKS) lines the GTP pocket. The Effector region signature appears at 33–41 (YDPTIEDSY). Residues 58-62 (DTAGQ) and 117-120 (NKCD) contribute to the GTP site. A disordered region spans residues 176-290 (EKQQQQQQQQ…KSKNGCCVIV (115 aa)). 2 stretches are compositionally biased toward low complexity: residues 178–216 (QQQQ…NNNN) and 246–283 (PNQS…SKSK). A lipid anchor (S-palmitoyl cysteine) is attached at cysteine 286. Cysteine methyl ester is present on cysteine 287. Residue cysteine 287 is the site of S-farnesyl cysteine attachment. A propeptide spans 288 to 290 (VIV) (removed in mature form).

The protein belongs to the small GTPase superfamily. Ras family.

It is found in the cell membrane. Its activity is regulated as follows. Alternates between an inactive form bound to GDP and an active form bound to GTP. Activated by a guanine nucleotide-exchange factor (GEF) and inactivated by a GTPase-activating protein (GAP). Its function is as follows. Required for the regulation of both a MAP kinase signaling pathway and a cAMP signaling pathway. The activation of these pathways contributes to the pathogenicity of the cells through the induction of the morphological transition from the yeast to the polarized filamentous form. This Candida albicans (strain SC5314 / ATCC MYA-2876) (Yeast) protein is Ras-like protein 1 (RAS1).